A 445-amino-acid polypeptide reads, in one-letter code: WD repeat domain phosphoinositide-interacting protein 2 (445 aa).

The stretch at 182-222 (AHDSPLAALAFDASGTKLATASEKGTVIRVFSIPEGQKLFE) is one WD 1 repeat. The L/FRRG motif signature appears at 223–226 (FRRG). WD repeat units lie at residues 228 to 267 (KRCVSICSLAFSMDGMFLSASSNTETVHIFKLEAVREKPP) and 311 to 349 (GHKNICSLTTIQKIPRLLVGASDGYLYMYNLDPQEGGEC). S395 bears the Phosphoserine mark.

It belongs to the WD repeat PROPPIN family. In terms of assembly, interacts with TECPR1. Interacts with ATG16L1. Interacts with ATG5. Interacts with WIPI1. Interacts with WDR45. May interact with NUDC. Interacts with ULK1 and RB1CC1.

The protein localises to the preautophagosomal structure membrane. Component of the autophagy machinery that controls the major intracellular degradation process by which cytoplasmic materials are packaged into autophagosomes and delivered to lysosomes for degradation. Involved in an early step of the formation of preautophagosomal structures. Binds and is activated by phosphatidylinositol 3-phosphate (PtdIns3P) forming on membranes of the endoplasmic reticulum upon activation of the upstream ULK1 and PI3 kinases. Mediates ER-isolation membranes contacts by interacting with the ULK1:RB1CC1 complex and PtdIns3P. Once activated, WIPI2 recruits at phagophore assembly sites the ATG12-ATG5-ATG16L1 complex that directly controls the elongation of the nascent autophagosomal membrane. This Mus musculus (Mouse) protein is WD repeat domain phosphoinositide-interacting protein 2.